A 275-amino-acid chain; its full sequence is Energy-coupling factor transporter ATP-binding protein EcfA1 (275 aa).

Residues 5 to 240 form the ABC transporter domain; it reads IDVKNLSFRY…NDLDQIGLDD (236 aa). 40–47 is an ATP binding site; sequence GHNGSGKS.

The protein belongs to the ABC transporter superfamily. Energy-coupling factor EcfA family. As to quaternary structure, forms a stable energy-coupling factor (ECF) transporter complex composed of 2 membrane-embedded substrate-binding proteins (S component), 2 ATP-binding proteins (A component) and 2 transmembrane proteins (T component).

The protein localises to the cell membrane. Functionally, ATP-binding (A) component of a common energy-coupling factor (ECF) ABC-transporter complex. Unlike classic ABC transporters this ECF transporter provides the energy necessary to transport a number of different substrates. This is Energy-coupling factor transporter ATP-binding protein EcfA1 from Streptococcus pneumoniae serotype 4 (strain ATCC BAA-334 / TIGR4).